The chain runs to 295 residues: Acetylglutamate kinase (295 aa).

Substrate-binding positions include 70-71 (GG), Arg92, and Asn191.

It belongs to the acetylglutamate kinase family. ArgB subfamily.

It is found in the cytoplasm. It carries out the reaction N-acetyl-L-glutamate + ATP = N-acetyl-L-glutamyl 5-phosphate + ADP. The protein operates within amino-acid biosynthesis; L-arginine biosynthesis; N(2)-acetyl-L-ornithine from L-glutamate: step 2/4. Functionally, catalyzes the ATP-dependent phosphorylation of N-acetyl-L-glutamate. This is Acetylglutamate kinase from Mycolicibacterium paratuberculosis (strain ATCC BAA-968 / K-10) (Mycobacterium paratuberculosis).